Consider the following 155-residue polypeptide: Probable cyclic pyranopterin monophosphate synthase (155 aa).

Residues 74–76 (MCH) and 110–111 (ME) contribute to the substrate site. Residue aspartate 125 is part of the active site.

Belongs to the MoaC family. In terms of assembly, homohexamer; trimer of dimers.

The catalysed reaction is (8S)-3',8-cyclo-7,8-dihydroguanosine 5'-triphosphate = cyclic pyranopterin phosphate + diphosphate. The protein operates within cofactor biosynthesis; molybdopterin biosynthesis. Its function is as follows. Catalyzes the conversion of (8S)-3',8-cyclo-7,8-dihydroguanosine 5'-triphosphate to cyclic pyranopterin monophosphate (cPMP). The sequence is that of Probable cyclic pyranopterin monophosphate synthase from Methanoregula boonei (strain DSM 21154 / JCM 14090 / 6A8).